Here is a 501-residue protein sequence, read N- to C-terminus: 7-alpha-hydroxycholest-4-en-3-one 12-alpha-hydroxylase (501 aa).

A helical transmembrane segment spans residues 1 to 21 (MVLWGPVLGALLVVIAGYLCL). A Phosphoserine modification is found at serine 326. A heme-binding site is contributed by cysteine 440.

This sequence belongs to the cytochrome P450 family. Heme is required as a cofactor. As to expression, liver.

It is found in the endoplasmic reticulum membrane. The protein localises to the microsome membrane. It catalyses the reaction 7alpha-hydroxycholest-4-en-3-one + reduced [NADPH--hemoprotein reductase] + O2 = 7alpha,12alpha-dihydroxycholest-4-en-3-one + oxidized [NADPH--hemoprotein reductase] + H2O + H(+). The catalysed reaction is 5beta-cholestane-3alpha,7alpha-diol + reduced [NADPH--hemoprotein reductase] + O2 = 5beta-cholestane-3alpha,7alpha,12alpha-triol + oxidized [NADPH--hemoprotein reductase] + H2O + H(+). The enzyme catalyses chenodeoxycholate + reduced [NADPH--hemoprotein reductase] + O2 = cholate + oxidized [NADPH--hemoprotein reductase] + H2O + H(+). It participates in lipid metabolism; bile acid biosynthesis. In terms of biological role, a cytochrome P450 monooxygenase involved in primary bile acid biosynthesis. Catalyzes the 12alpha-hydroxylation of 7alpha-hydroxy-4-cholesten-3-one, an intermediate metabolite in cholic acid biosynthesis. Controls biliary balance of cholic acid and chenodeoxycholic acid, ultimately regulating the intestinal absorption of dietary lipids. Mechanistically, uses molecular oxygen inserting one oxygen atom into a substrate, and reducing the second into a water molecule, with two electrons provided by NADPH via cytochrome P450 reductase (CPR; NADPH--hemoprotein reductase). The protein is 7-alpha-hydroxycholest-4-en-3-one 12-alpha-hydroxylase of Homo sapiens (Human).